The primary structure comprises 421 residues: Telomeric repeat-binding factor 1 (421 aa).

A disordered region spans residues 1 to 30 (MAETVSSAARDAPSREGWTDSDSPEQEEVG). Position 2 is an N-acetylalanine (alanine 2). The interval 49 to 255 (ENAELVAEVE…AATKVVENEK (207 aa)) is TRFH mediates dimerization. Residue lysine 200 forms a Glycyl lysine isopeptide (Lys-Gly) (interchain with G-Cter in SUMO2) linkage. At serine 206 the chain carries Phosphoserine; by ATM. Residues 252 to 365 (ENEKARTQAS…PDTDDKSGRR (114 aa)) form an interaction with RLIM region. Residues 253-266 (NEKARTQASKDRPD) are compositionally biased toward basic and acidic residues. The segment at 253–366 (NEKARTQASK…DTDDKSGRRK (114 aa)) is disordered. Polar residues predominate over residues 284–310 (VNGQQSTETEPLVDTVSSIRSHKNALS). The short motif at 313 to 367 (KHRRAPSDFSRNEARTGTLQCETTMERNRRTSGRNRLCVSENQPDTDDKSGRRKR) is the Nuclear localization signal element. The region spanning 362–419 (SGRRKRQTWLWEEDRILKCGVKKYGEGNWAKILSHYKFNNRTSVMLKDRWRTMKRLKL) is the HTH myb-type domain. The segment at residues 390–415 (WAKILSHYKFNNRTSVMLKDRWRTMK) is a DNA-binding region (H-T-H motif).

As to quaternary structure, homodimer; can contain both isoforms. Found in a complex with POT1; TINF2 and TNKS1. Interacts with ATM, TINF2, TNKS1, TNKS2, PINX1, NEK2 and MAPRE1. Component of the shelterin complex (telosome) composed of TERF1, TERF2, TINF2, TERF2IP ACD and POT1. Interacts with RLIM (via N-terminus). Interacts with FBXO4. Interaction with TINF2 protects against interaction with FBXO4 and subsequent polyubiquitination and proteasomal degradation. Interacts with GNL3L; this interaction promotes homodimerization. Interacts with TIN2. Interactions with GNL3L and TIN2 are mutually exclusive. Interacts with RTEL1. Interacts with CCDC79/TERB1. Phosphorylated preferentially on Ser-219 in an ATM-dependent manner in response to ionizing DNA damage. Post-translationally, ADP-ribosylation by TNKS1 or TNKS2 diminishes its ability to bind to telomeric DNA. In terms of processing, ubiquitinated by RLIM/RNF12, leading to its degradation by the proteasome. Ubiquitinated by a SCF (SKP1-CUL1-F-box protein) ubiquitin-protein ligase complex, leading to its degradation by the proteasome.

Its subcellular location is the nucleus. The protein resides in the chromosome. The protein localises to the telomere. It localises to the cytoplasm. It is found in the cytoskeleton. Its subcellular location is the spindle. In terms of biological role, binds the telomeric double-stranded 5'-TTAGGG-3' repeat and negatively regulates telomere length. Involved in the regulation of the mitotic spindle. Component of the shelterin complex (telosome) that is involved in the regulation of telomere length and protection. Shelterin associates with arrays of double-stranded 5'-TTAGGG-3' repeats added by telomerase and protects chromosome ends; without its protective activity, telomeres are no longer hidden from the DNA damage surveillance and chromosome ends are inappropriately processed by DNA repair pathways. This chain is Telomeric repeat-binding factor 1 (Terf1), found in Mus musculus (Mouse).